We begin with the raw amino-acid sequence, 355 residues long: UDP-N-acetylglucosamine--N-acetylmuramyl-(pentapeptide) pyrophosphoryl-undecaprenol N-acetylglucosamine transferase (355 aa).

UDP-N-acetyl-alpha-D-glucosamine-binding positions include 15–17 (TGG), asparagine 127, arginine 163, serine 191, isoleucine 244, 263–268 (ALTVSE), and glutamine 288.

Belongs to the glycosyltransferase 28 family. MurG subfamily.

The protein resides in the cell inner membrane. The enzyme catalyses di-trans,octa-cis-undecaprenyl diphospho-N-acetyl-alpha-D-muramoyl-L-alanyl-D-glutamyl-meso-2,6-diaminopimeloyl-D-alanyl-D-alanine + UDP-N-acetyl-alpha-D-glucosamine = di-trans,octa-cis-undecaprenyl diphospho-[N-acetyl-alpha-D-glucosaminyl-(1-&gt;4)]-N-acetyl-alpha-D-muramoyl-L-alanyl-D-glutamyl-meso-2,6-diaminopimeloyl-D-alanyl-D-alanine + UDP + H(+). Its pathway is cell wall biogenesis; peptidoglycan biosynthesis. Its function is as follows. Cell wall formation. Catalyzes the transfer of a GlcNAc subunit on undecaprenyl-pyrophosphoryl-MurNAc-pentapeptide (lipid intermediate I) to form undecaprenyl-pyrophosphoryl-MurNAc-(pentapeptide)GlcNAc (lipid intermediate II). This chain is UDP-N-acetylglucosamine--N-acetylmuramyl-(pentapeptide) pyrophosphoryl-undecaprenol N-acetylglucosamine transferase, found in Salmonella gallinarum (strain 287/91 / NCTC 13346).